The primary structure comprises 459 residues: tRNA-guanine(15) transglycosylase (459 aa).

The Nucleophile role is filled by Asp-90. Substrate contacts are provided by Asp-125 and Gly-192. Zn(2+) is bound by residues Cys-275, Cys-277, and Cys-280.

It belongs to the archaeosine tRNA-ribosyltransferase family. The cofactor is Zn(2+).

It catalyses the reaction guanosine(15) in tRNA + 7-cyano-7-deazaguanine = 7-cyano-7-carbaguanosine(15) in tRNA + guanine. It functions in the pathway tRNA modification; archaeosine-tRNA biosynthesis. In terms of biological role, exchanges the guanine residue with 7-cyano-7-deazaguanine (preQ0) at position 15 in the dihydrouridine loop (D-loop) of archaeal tRNAs. The sequence is that of tRNA-guanine(15) transglycosylase from Methanopyrus kandleri (strain AV19 / DSM 6324 / JCM 9639 / NBRC 100938).